The sequence spans 876 residues: DNA polymerase 1 (876 aa).

It belongs to the DNA polymerase type-B family.

The catalysed reaction is DNA(n) + a 2'-deoxyribonucleoside 5'-triphosphate = DNA(n+1) + diphosphate. Functionally, this polymerase possesses two enzymatic activities: DNA synthesis (polymerase) and an exonucleolytic activity that degrades single-stranded DNA in the 3'- to 5'-direction. This Sulfolobus acidocaldarius (strain ATCC 33909 / DSM 639 / JCM 8929 / NBRC 15157 / NCIMB 11770) protein is DNA polymerase 1 (dpo1).